The following is a 944-amino-acid chain: Nonsense-mediated mRNA decay factor SMG8 (944 aa).

2 disordered regions span residues 560–597 and 628–653; these read NTGKSGAPQDEDAGEDEAEEEEGQERELPTKKKLQNTA and QASSEQLSNSEQNTTSSGTSSADTEN. Positions 568–583 are enriched in acidic residues; it reads QDEDAGEDEAEEEEGQ. The segment covering 628 to 650 has biased composition (polar residues); the sequence is QASSEQLSNSEQNTTSSGTSSAD.

It belongs to the SMG8 family.

Involved in nonsense-mediated decay (NMD) of mRNAs containing premature stop codons. Probable component of kinase complex containing nonC and recruited to stalled ribosomes. The sequence is that of Nonsense-mediated mRNA decay factor SMG8 from Drosophila simulans (Fruit fly).